Here is a 91-residue protein sequence, read N- to C-terminus: C-C motif chemokine 5 (91 aa).

A signal peptide spans 1 to 23; that stretch reads MKISAAVLTVVLMAASLCAPASA. Cystine bridges form between Cys-33–Cys-57 and Cys-34–Cys-73.

Belongs to the intercrine beta (chemokine CC) family.

It is found in the secreted. Chemoattractant for blood monocytes, memory T-helper cells and eosinophils. Causes the release of histamine from basophils and activates eosinophils. May activate several chemokine receptors including CCR1, CCR3, CCR4 and CCR5. May also be an agonist of the G protein-coupled receptor GPR75. Together with GPR75, may play a role in neuron survival through activation of a downstream signaling pathway involving the PI3, Akt and MAP kinases. By activating GPR75 may also play a role in insulin secretion by islet cells. This chain is C-C motif chemokine 5 (CCL5), found in Sigmodon hispidus (Hispid cotton rat).